Reading from the N-terminus, the 355-residue chain is Type II methyltransferase M.MthZI (355 aa).

It belongs to the N(4)/N(6)-methyltransferase family. N(4) subfamily.

The catalysed reaction is a 2'-deoxycytidine in DNA + S-adenosyl-L-methionine = an N(4)-methyl-2'-deoxycytidine in DNA + S-adenosyl-L-homocysteine + H(+). A beta subtype methylase that recognizes the double-stranded sequence 5'-CTAG-3', methylates C-1 on both strands, and protects the DNA from cleavage by the MthZI endonuclease. The protein is Type II methyltransferase M.MthZI of Methanothermobacter thermautotrophicus (Methanobacterium thermoformicicum).